Reading from the N-terminus, the 341-residue chain is Tubulin-specific chaperone C (341 aa).

M1 is subject to N-acetylmethionine. Over residues 34-49 (ERQIEVERRKQKRQDQ) the composition is skewed to basic and acidic residues. The tract at residues 34 to 55 (ERQIEVERRKQKRQDQEVEEEK) is disordered. Residue S79 is modified to Phosphoserine. Positions 148-173 (TAQVDAAPVTSAAPSPPVTKEEEGAP) are disordered. In terms of domain architecture, C-CAP/cofactor C-like spans 163–318 (PPVTKEEEGA…NWDQVDDFNW (156 aa)).

The protein belongs to the TBCC family. In terms of assembly, supercomplex made of cofactors A to E. Cofactors A and D function by capturing and stabilizing tubulin in a quasi-native conformation. Cofactor E binds to the cofactor D-tubulin complex; interaction with cofactor C then causes the release of tubulin polypeptides that are committed to the native state.

Its subcellular location is the cytoplasm. Tubulin-folding protein; involved in the final step of the tubulin folding pathway. This chain is Tubulin-specific chaperone C (Tbcc), found in Mus musculus (Mouse).